The sequence spans 177 residues: Inner membrane-spanning protein YciB (177 aa).

The next 5 helical transmembrane spans lie at 22–42, 50–70, 76–96, 121–141, and 149–169; these read IFIASGSLIVISGLICIIHWI, ISLFSFLSVFFFGSLTIFFHN, WKITIIYIIFSLVLLISQFFT, FIWSLFFLFCAILNIYIAYYF, and FKVFGFTSLTFFLILITSIYI.

It belongs to the YciB family.

It localises to the cell inner membrane. Functionally, plays a role in cell envelope biogenesis, maintenance of cell envelope integrity and membrane homeostasis. The protein is Inner membrane-spanning protein YciB of Buchnera aphidicola subsp. Acyrthosiphon pisum (strain APS) (Acyrthosiphon pisum symbiotic bacterium).